A 1919-amino-acid polypeptide reads, in one-letter code: Protein TIC 214 (1919 aa).

6 helical membrane-spanning segments follow: residues 18 to 38, 67 to 87, 90 to 110, 127 to 147, 175 to 195, and 224 to 244; these read IINSVVVVGLYYGFLTTFSIG, FITGQLMMFISIYYAPLHLAL, PHTITVLALPYLLFHFFWNNH, LSIQCVFLNNLIFQLFNHFIL, VGWLIGHILFMKWVGLVLVWI, and IFSILLFITCVYYLGRIPSPI. 3 disordered regions span residues 250–375, 1107–1129, and 1606–1636; these read KETP…GKEK, IKSITKEKKKGTPGIKSSPNKRS, and ELKNRNQEEKEPADRGDLGSDAQNQGNRRFV. Composition is skewed to acidic residues over residues 259–269, 278–288, 297–307, 316–328, and 355–366; these read GESEEETDVEI, GESEEETDVEIET, and EKEDPDKIDETE. Positions 1107 to 1117 are enriched in basic residues; the sequence is IKSITKEKKKG. The span at 1606 to 1623 shows a compositional bias: basic and acidic residues; that stretch reads ELKNRNQEEKEPADRGDL. The segment covering 1626–1636 has biased composition (polar residues); the sequence is DAQNQGNRRFV.

Belongs to the TIC214 family. Part of the Tic complex.

The protein localises to the plastid. It localises to the chloroplast inner membrane. In terms of biological role, involved in protein precursor import into chloroplasts. May be part of an intermediate translocation complex acting as a protein-conducting channel at the inner envelope. In Panax ginseng (Korean ginseng), this protein is Protein TIC 214.